We begin with the raw amino-acid sequence, 192 residues long: Ras-like protein 2 (192 aa).

Residue 12–19 (GGGGVGKS) coordinates GTP. The Effector region motif lies at 34–42 (YDPTIEDSY). Cys-46 carries the S-palmitoyl cysteine lipid modification. GTP contacts are provided by residues 59 to 63 (DTAGQ) and 118 to 121 (NKCD). 2 S-palmitoyl cysteine lipidation sites follow: Cys-120 and Cys-147. Cys-189 is subject to Cysteine methyl ester. Cys-189 is lipidated: S-farnesyl cysteine. Residues 190–192 (CLM) constitute a propeptide, removed in mature form.

It belongs to the small GTPase superfamily. Ras family. As to quaternary structure, interacts with hzg.

It localises to the cell membrane. The catalysed reaction is GTP + H2O = GDP + phosphate + H(+). Its activity is regulated as follows. Alternates between an inactive form bound to GDP and an active form bound to GTP. Activated by a guanine nucleotide-exchange factor (GEF) and inactivated by a GTPase-activating protein (GAP). Its function is as follows. May be involved in endocytic processes and/or other transport pathways mediated by vesicle trafficking. May interact functionally with ROP protein. Ras proteins bind GDP/GTP and possess intrinsic GTPase activity. This Drosophila melanogaster (Fruit fly) protein is Ras-like protein 2 (Ras64B).